A 173-amino-acid chain; its full sequence is Probable chemoreceptor glutamine deamidase CheD 2 (173 aa).

This sequence belongs to the CheD family.

It carries out the reaction L-glutaminyl-[protein] + H2O = L-glutamyl-[protein] + NH4(+). Functionally, probably deamidates glutamine residues to glutamate on methyl-accepting chemotaxis receptors (MCPs), playing an important role in chemotaxis. This chain is Probable chemoreceptor glutamine deamidase CheD 2, found in Albidiferax ferrireducens (strain ATCC BAA-621 / DSM 15236 / T118) (Rhodoferax ferrireducens).